A 458-amino-acid polypeptide reads, in one-letter code: Exodeoxyribonuclease 7 large subunit (458 aa).

This sequence belongs to the XseA family. Heterooligomer composed of large and small subunits.

Its subcellular location is the cytoplasm. The catalysed reaction is Exonucleolytic cleavage in either 5'- to 3'- or 3'- to 5'-direction to yield nucleoside 5'-phosphates.. In terms of biological role, bidirectionally degrades single-stranded DNA into large acid-insoluble oligonucleotides, which are then degraded further into small acid-soluble oligonucleotides. The chain is Exodeoxyribonuclease 7 large subunit from Escherichia coli O17:K52:H18 (strain UMN026 / ExPEC).